A 95-amino-acid chain; its full sequence is Protein TRACHEARY ELEMENT DIFFERENTIATION-RELATED 6 (95 aa).

Over 1–3 (MAT) the chain is Extracellular. The helical transmembrane segment at 4–24 (IFIVFVSFGCVFVLGIAAFVL) threads the bilayer. Residues 25-95 (CCLIKKWKCS…KLGTASTSKA (71 aa)) are Cytoplasmic-facing.

In terms of assembly, interacts with the secondary cell wall (SCW)-related cellulose synthase complex. In terms of tissue distribution, accumulates in cells differentiating into tracheary element (TE) which undergo secondary cell wall (SCW) formation.

It localises to the cell membrane. The protein resides in the secreted. Its subcellular location is the cell wall. Functionally, involved in the secondary cell wall (SCW) formation of vessel elements (e.g. protoxylem and metaxylem), thus promoting tracheary element (TE) differentiation. This chain is Protein TRACHEARY ELEMENT DIFFERENTIATION-RELATED 6, found in Zinnia elegans (Garden zinnia).